The sequence spans 144 residues: Large ribosomal subunit protein uL15 (144 aa).

The segment at 1–53 is disordered; sequence MYLNTLAPAEGAKHSAKRLGRGIGSGLGKTGGRGHKGQKSRTGGGVRRGFEGG. Gly residues predominate over residues 21–31; that stretch reads RGIGSGLGKTG.

This sequence belongs to the universal ribosomal protein uL15 family. In terms of assembly, part of the 50S ribosomal subunit.

Its function is as follows. Binds to the 23S rRNA. In Mannheimia succiniciproducens (strain KCTC 0769BP / MBEL55E), this protein is Large ribosomal subunit protein uL15.